The chain runs to 689 residues: Glycine--tRNA ligase beta subunit (689 aa).

The protein belongs to the class-II aminoacyl-tRNA synthetase family. In terms of assembly, tetramer of two alpha and two beta subunits.

Its subcellular location is the cytoplasm. It catalyses the reaction tRNA(Gly) + glycine + ATP = glycyl-tRNA(Gly) + AMP + diphosphate. The chain is Glycine--tRNA ligase beta subunit from Oenococcus oeni (strain ATCC BAA-331 / PSU-1).